The chain runs to 252 residues: Triosephosphate isomerase (252 aa).

10–12 serves as a coordination point for substrate; it reads NWK. His-96 functions as the Electrophile in the catalytic mechanism. The active-site Proton acceptor is the Glu-168. Substrate-binding positions include Gly-174, Ser-214, and 235–236; that span reads GG.

Belongs to the triosephosphate isomerase family. Homodimer.

It is found in the cytoplasm. It catalyses the reaction D-glyceraldehyde 3-phosphate = dihydroxyacetone phosphate. It participates in carbohydrate biosynthesis; gluconeogenesis. Its pathway is carbohydrate degradation; glycolysis; D-glyceraldehyde 3-phosphate from glycerone phosphate: step 1/1. Its function is as follows. Involved in the gluconeogenesis. Catalyzes stereospecifically the conversion of dihydroxyacetone phosphate (DHAP) to D-glyceraldehyde-3-phosphate (G3P). The polypeptide is Triosephosphate isomerase (Lactobacillus delbrueckii subsp. bulgaricus (strain ATCC 11842 / DSM 20081 / BCRC 10696 / JCM 1002 / NBRC 13953 / NCIMB 11778 / NCTC 12712 / WDCM 00102 / Lb 14)).